The chain runs to 254 residues: UDP-2,3-diacylglucosamine hydrolase (254 aa).

The Mn(2+) site is built by Asp-8, His-10, Asp-41, Asn-79, and His-114. Residue 79–80 (NR) coordinates substrate. 5 residues coordinate substrate: Asp-122, Ser-160, Asn-164, Lys-167, and His-195. Positions 195 and 197 each coordinate Mn(2+).

This sequence belongs to the LpxH family. The cofactor is Mn(2+).

It localises to the cell inner membrane. The enzyme catalyses UDP-2-N,3-O-bis[(3R)-3-hydroxytetradecanoyl]-alpha-D-glucosamine + H2O = 2-N,3-O-bis[(3R)-3-hydroxytetradecanoyl]-alpha-D-glucosaminyl 1-phosphate + UMP + 2 H(+). Its pathway is glycolipid biosynthesis; lipid IV(A) biosynthesis; lipid IV(A) from (3R)-3-hydroxytetradecanoyl-[acyl-carrier-protein] and UDP-N-acetyl-alpha-D-glucosamine: step 4/6. In terms of biological role, hydrolyzes the pyrophosphate bond of UDP-2,3-diacylglucosamine to yield 2,3-diacylglucosamine 1-phosphate (lipid X) and UMP by catalyzing the attack of water at the alpha-P atom. Involved in the biosynthesis of lipid A, a phosphorylated glycolipid that anchors the lipopolysaccharide to the outer membrane of the cell. This chain is UDP-2,3-diacylglucosamine hydrolase, found in Aeromonas salmonicida (strain A449).